A 468-amino-acid polypeptide reads, in one-letter code: ATP synthase subunit beta (468 aa).

156–163 is an ATP binding site; it reads GGAGVGKT.

The protein belongs to the ATPase alpha/beta chains family. F-type ATPases have 2 components, CF(1) - the catalytic core - and CF(0) - the membrane proton channel. CF(1) has five subunits: alpha(3), beta(3), gamma(1), delta(1), epsilon(1). CF(0) has three main subunits: a(1), b(2) and c(9-12). The alpha and beta chains form an alternating ring which encloses part of the gamma chain. CF(1) is attached to CF(0) by a central stalk formed by the gamma and epsilon chains, while a peripheral stalk is formed by the delta and b chains.

It localises to the cell inner membrane. It carries out the reaction ATP + H2O + 4 H(+)(in) = ADP + phosphate + 5 H(+)(out). Produces ATP from ADP in the presence of a proton gradient across the membrane. The catalytic sites are hosted primarily by the beta subunits. This is ATP synthase subunit beta from Sulfurimonas denitrificans (strain ATCC 33889 / DSM 1251) (Thiomicrospira denitrificans (strain ATCC 33889 / DSM 1251)).